We begin with the raw amino-acid sequence, 232 residues long: EEF1A lysine methyltransferase 3 (232 aa).

S-adenosyl-L-methionine-binding positions include W57, 83 to 85 (GAG), D104, W133, and A150.

The protein belongs to the methyltransferase superfamily. METTL21 family. As to quaternary structure, interacts with members of the heat shock protein 70 and 90 families and of the TCP-1 chaperonin family, as well as with HSPD1, STIP1 and tubulin; at least some of these proteins may be methylation substrates.

It is found in the cytoplasm. It localises to the cytoskeleton. The protein resides in the microtubule organizing center. The protein localises to the centrosome. The enzyme catalyses L-lysyl-[protein] + 3 S-adenosyl-L-methionine = N(6),N(6),N(6)-trimethyl-L-lysyl-[protein] + 3 S-adenosyl-L-homocysteine + 3 H(+). It catalyses the reaction L-lysyl-[protein] + S-adenosyl-L-methionine = N(6)-methyl-L-lysyl-[protein] + S-adenosyl-L-homocysteine + H(+). It carries out the reaction N(6)-methyl-L-lysyl-[protein] + S-adenosyl-L-methionine = N(6),N(6)-dimethyl-L-lysyl-[protein] + S-adenosyl-L-homocysteine + H(+). The catalysed reaction is N(6),N(6)-dimethyl-L-lysyl-[protein] + S-adenosyl-L-methionine = N(6),N(6),N(6)-trimethyl-L-lysyl-[protein] + S-adenosyl-L-homocysteine + H(+). Its function is as follows. Protein-lysine methyltransferase that selectively mono-, di- and trimethylates 'Lys-165' of the translation elongation factors EEF1A1 and EEF1A2 in an aminoacyl-tRNA and GTP-dependent manner. EEF1A1 methylation by EEF1AKMT3 is dynamic as well as inducible by stress conditions, such as ER-stress, and plays a regulatory role on mRNA translation. In Mus musculus (Mouse), this protein is EEF1A lysine methyltransferase 3.